The chain runs to 630 residues: MDEMATTQISKDELDELKEAFAKVDLNSNGFICDYELHELFKEANMPLPGYKVREIIQKLMLDGDRNKDGKISFDEFVYIFQEVKSSDIAKTFRKAINRKEGICALGGTSELSSEGTQHSYSEEEKYAFVNWINKALENDPDCRHVIPMNPNTDDLFKAVGDGIVLCKMINLSVPDTIDERAINKKKLTPFIIQENLNLALNSASAIGCHVVNIGAEDLRAGKPHLVLGLLWQIIKIGLFADIELSRNEALAALLRDGETLEELMKLSPEELLLRWANFHLENSGWQKINNFSADIKDSKAYFHLLNQIAPKGQKEGEPRIDINMSGFNETDDLKRAESMLQQADKLGCRQFVTPADVVSGNPKLNLAFVANLFNKYPALTKPENQDIDWTLLEGETREERTFRNWMNSLGVNPHVNHLYADLQDALVILQLYERIKVPVDWSKVNKPPYPKLGANMKKLENCNYAVELGKHPAKFSLVGIGGQDLNDGNQTLTLALVWQLMRRYTLNVLEDLGDGQKANDDIIVNWVNRTLSEAGKSTSIQSFKDKTISSSLAVVDLIDAIQPGCINYDLVKSGNLTEDDKHNNAKYAVSMARRIGARVYALPEDLVEVKPKMVMTVFACLMGRGMKRV.

EF-hand domains lie at 12-47 and 52-87; these read DELDELKEAFAKVDLNSNGFICDYELHELFKEANMP and KVREIIQKLMLDGDRNKDGKISFDEFVYIFQEVKSS. Residues Asp-25, Asn-27, Asn-29, Glu-36, Asp-65, Asn-67, Asp-69, Lys-71, and Glu-76 each contribute to the Ca(2+) site. Actin-binding stretches follow at residues 109–382 and 383–627; these read TSEL…ALTK and PENQ…GRGM. Calponin-homology (CH) domains are found at residues 123–239 and 267–378; these read EEEK…KIGL and LSPE…NKYP. Phosphoserine is present on residues Ser-268, Ser-293, Ser-326, and Ser-339. The residue at position 391 (Thr-391) is a Phosphothreonine. Calponin-homology (CH) domains lie at 397 to 506 and 518 to 627; these read TREE…RRYT and KAND…GRGM.

As to quaternary structure, monomer. Expressed in a variety of organs, including muscle, brain, uterus and esophagus.

The protein resides in the cytoplasm. Actin-bundling protein. This Homo sapiens (Human) protein is Plastin-3 (PLS3).